A 794-amino-acid chain; its full sequence is Copper amine oxidase-like protein cao2 (794 aa).

Substrate is bound by residues 307–318 (AYDLGEYGVGYR) and 391–396 (AANYEY). The Proton acceptor role is filled by Asp-309. Tyr-394 (schiff-base intermediate with substrate; via topaquinone) is an active-site residue. At Tyr-394 the chain carries 2',4',5'-topaquinone. The Cu cation site is built by His-445 and His-447. Residues 563–584 (GDYAPQASDDTPKGLSKWISDD) form a disordered region. Mn(2+)-binding residues include Asp-593 and Ile-594. Residue His-604 coordinates Cu cation. The interval 634 to 748 (ALDTSSSVNS…NGGHHHHHHH (115 aa)) is disordered. The span at 637-649 (TSSSVNSTSEATS) shows a compositional bias: low complexity. Residues 652-714 (THHENLRDTS…DAAQKHEGRS (63 aa)) show a composition bias toward basic and acidic residues. The segment covering 716–727 (TLAQPGQQNANQ) has biased composition (polar residues).

It belongs to the copper/topaquinone oxidase family. Homodimer. Cu cation serves as cofactor. It depends on Zn(2+) as a cofactor. L-topaquinone is required as a cofactor. Requires Mn(2+) as cofactor. In terms of processing, topaquinone (TPQ) is generated by copper-dependent autoxidation of a specific tyrosyl residue.

It localises to the cytoplasm. The catalysed reaction is a primary methyl amine + O2 + H2O = an aldehyde + H2O2 + NH4(+). Copper amine oxidase-like protein that does not show any copper amine oxidase activity. May be the appropriate amine substrate for cao2 has not been identified yet. The chain is Copper amine oxidase-like protein cao2 (cao2) from Schizosaccharomyces pombe (strain 972 / ATCC 24843) (Fission yeast).